The primary structure comprises 241 residues: Ubiquinone biosynthesis O-methyltransferase (241 aa).

S-adenosyl-L-methionine is bound by residues arginine 44, glycine 63, aspartate 84, and methionine 128.

Belongs to the methyltransferase superfamily. UbiG/COQ3 family.

The enzyme catalyses a 3-demethylubiquinol + S-adenosyl-L-methionine = a ubiquinol + S-adenosyl-L-homocysteine + H(+). It carries out the reaction a 3-(all-trans-polyprenyl)benzene-1,2-diol + S-adenosyl-L-methionine = a 2-methoxy-6-(all-trans-polyprenyl)phenol + S-adenosyl-L-homocysteine + H(+). Its pathway is cofactor biosynthesis; ubiquinone biosynthesis. O-methyltransferase that catalyzes the 2 O-methylation steps in the ubiquinone biosynthetic pathway. This is Ubiquinone biosynthesis O-methyltransferase from Hydrogenovibrio crunogenus (strain DSM 25203 / XCL-2) (Thiomicrospira crunogena).